Consider the following 203-residue polypeptide: Outer-membrane lipoprotein carrier protein (203 aa).

The N-terminal stretch at 1–21 (MKKLLVACCLLSGFASTSVLA) is a signal peptide.

It belongs to the LolA family. As to quaternary structure, monomer.

The protein localises to the periplasm. Participates in the translocation of lipoproteins from the inner membrane to the outer membrane. Only forms a complex with a lipoprotein if the residue after the N-terminal Cys is not an aspartate (The Asp acts as a targeting signal to indicate that the lipoprotein should stay in the inner membrane). The protein is Outer-membrane lipoprotein carrier protein of Serratia proteamaculans (strain 568).